The sequence spans 242 residues: Protein ABHD14A (242 aa).

Residues alanine 6 to proline 26 traverse the membrane as a helical; Signal-anchor for type II membrane protein segment. The N-linked (GlcNAc...) asparagine glycan is linked to asparagine 38. Catalysis depends on charge relay system residues serine 142, aspartate 193, and histidine 220.

It belongs to the AB hydrolase superfamily. ABHD14 family.

Its subcellular location is the cytoplasm. The protein resides in the membrane. Its function is as follows. Possible role in granule neuron development. The chain is Protein ABHD14A from Rattus norvegicus (Rat).